A 224-amino-acid polypeptide reads, in one-letter code: Urease accessory protein UreF (224 aa).

It belongs to the UreF family. In terms of assembly, ureD, UreF and UreG form a complex that acts as a GTP-hydrolysis-dependent molecular chaperone, activating the urease apoprotein by helping to assemble the nickel containing metallocenter of UreC. The UreE protein probably delivers the nickel.

It is found in the cytoplasm. Required for maturation of urease via the functional incorporation of the urease nickel metallocenter. The polypeptide is Urease accessory protein UreF (Klebsiella pneumoniae subsp. pneumoniae (strain ATCC 700721 / MGH 78578)).